Consider the following 125-residue polypeptide: Small ribosomal subunit protein eS8 (125 aa).

This sequence belongs to the eukaryotic ribosomal protein eS8 family. Part of the 30S ribosomal subunit.

The chain is Small ribosomal subunit protein eS8 from Methanocella arvoryzae (strain DSM 22066 / NBRC 105507 / MRE50).